Consider the following 554-residue polypeptide: Hydroxylamine reductase (554 aa).

[2Fe-2S] cluster is bound by residues Cys-3, Cys-6, Cys-18, and Cys-25. Hybrid [4Fe-2O-2S] cluster-binding residues include His-252, Glu-276, Cys-320, Cys-408, Cys-436, Cys-461, Glu-495, and Lys-497. A Cysteine persulfide modification is found at Cys-408.

This sequence belongs to the HCP family. [2Fe-2S] cluster serves as cofactor. The cofactor is hybrid [4Fe-2O-2S] cluster.

It localises to the cytoplasm. The catalysed reaction is A + NH4(+) + H2O = hydroxylamine + AH2 + H(+). In terms of biological role, catalyzes the reduction of hydroxylamine to form NH(3) and H(2)O. In Shewanella sp. (strain MR-7), this protein is Hydroxylamine reductase.